The primary structure comprises 91 residues: Large ribosomal subunit protein eL43 (91 aa).

The segment at 39-60 (CSFCGKEAMKRKATGIWNCAKC) adopts a C4-type zinc-finger fold.

It belongs to the eukaryotic ribosomal protein eL43 family.

This is Large ribosomal subunit protein eL43 from Caenorhabditis elegans.